Here is an 81-residue protein sequence, read N- to C-terminus: UPF0180 protein RBAM_013970 (81 aa).

This sequence belongs to the UPF0180 family.

The protein is UPF0180 protein RBAM_013970 of Bacillus velezensis (strain DSM 23117 / BGSC 10A6 / LMG 26770 / FZB42) (Bacillus amyloliquefaciens subsp. plantarum).